A 177-amino-acid polypeptide reads, in one-letter code: Inner membrane-spanning protein YciB (177 aa).

5 helical membrane passes run 22-42 (IFIA…IHWI), 50-70 (ISLF…FFHN), 76-96 (WKIT…QFFT), 121-141 (FIWS…AYYF), and 149-169 (FKVF…SIYI).

It belongs to the YciB family.

The protein localises to the cell inner membrane. Its function is as follows. Plays a role in cell envelope biogenesis, maintenance of cell envelope integrity and membrane homeostasis. This is Inner membrane-spanning protein YciB from Buchnera aphidicola subsp. Acyrthosiphon pisum (strain APS) (Acyrthosiphon pisum symbiotic bacterium).